Consider the following 434-residue polypeptide: Fc receptor-like protein 6 (434 aa).

An N-terminal signal peptide occupies residues 1 to 19 (MLLWTAVLLFVPCVGKTVW). 3 Ig-like C2-type domains span residues 20 to 95 (LYLQ…QTFT), 111 to 197 (PPVL…PQLE), and 207 to 293 (PVLT…KKLS). Residues 20–307 (LYLQAWPNPV…QVLFTPASNW (288 aa)) lie on the Extracellular side of the membrane. 3 cysteine pairs are disulfide-bonded: C39–C83, C132–C180, and C228–C276. N65 carries N-linked (GlcNAc...) asparagine glycosylation. A glycan (N-linked (GlcNAc...) asparagine) is linked at N273. The helical transmembrane segment at 308-328 (LVPWLPASLLGLMVIAAALLV) threads the bilayer. The Cytoplasmic segment spans residues 329 to 434 (YVRSWRKAGP…PLSDCEEVLC (106 aa)). An ITIM motif motif is present at residues 369–374 (VVYSVV). At Y371 the chain carries Phosphotyrosine.

As to quaternary structure, interacts (tyrosine phosphorylated) with PTPN11. Interacts (tyrosine phosphorylated) with PTPN6, INPP5D, INPPL1 and GRB2. Interacts with class II MHC HLA-DR when the alpha chain is associated with a beta-1, beta-4 or a beta-5 but not a beta-3 chain. Phosphorylated on Tyr residues. Tyrosine phosphorylation induces association with phosphatase PTPN11, PTPN6, INPP5D, INPPL1 and GRB2. As to expression, expressed by cytolytic cells including NK cells, effector and effector-memory CD8(+) T-cells, and a subset of NKT cells (at protein level). Also expressed in gamma delta T cells and in a rare subset of effector CD4(+) T-cells (at protein level). Expressed in spleen, skin, peripheral blood leukocytes, liver, lung, bone marrow, small intestine and placenta. Expression among T-cells is greatly expanded in HIV-1 infected individuals, and includes not only effector and effector-memory CD8(+) T-cells but also populations of CD4(+) T-cells. Expression among CD8(+) T-cells and NK cells is expanded in individuals with chronic lymphocytic leukemia (CLL) but is reduced in PBMCs from patients with acute (AML), chronic myeloid leukemia (CML) and non-Hodgkin's lymphoma. Expression is higher in PBMCs and/or CD3(+) cells of patients with autoimmune diseases, such as rheumatoid arthritis (RA), systemic lupus erythematosus (SLE) and idiopathic thrombocytopenia purpura (ITP). In contrast, expression in CD3(+) cells from patients with lupus anticoagulans (LA) is higher.

It localises to the cell membrane. Acts as a MHC class II receptor. When stimulated on its own, does not play a role in cytokine production or the release of cytotoxic granules by NK cells and cytotoxic CD8(+) T cells. Does not act as an Fc receptor. This is Fc receptor-like protein 6 (FCRL6) from Homo sapiens (Human).